Reading from the N-terminus, the 912-residue chain is E3 ubiquitin-protein ligase HACE1 (912 aa).

ANK repeat units follow at residues 23 to 55 (LPED…NSKF), 64 to 93 (VKRS…DPNY), 97 to 126 (SGCT…DVNI), 130 to 159 (EGLT…NVDV), 163 to 192 (MGQT…DINR), 196 to 226 (SGAT…YLPD), and 228 to 253 (NGVT…QHHP). An HECT domain is found at 577–912 (NCEKLKQGIA…HCGSYGYTMA (336 aa)). The active-site Glycyl thioester intermediate is Cys-879.

It is found in the golgi apparatus. The protein resides in the golgi stack membrane. Its subcellular location is the cytoplasm. It localises to the endoplasmic reticulum. The enzyme catalyses S-ubiquitinyl-[E2 ubiquitin-conjugating enzyme]-L-cysteine + [acceptor protein]-L-lysine = [E2 ubiquitin-conjugating enzyme]-L-cysteine + N(6)-ubiquitinyl-[acceptor protein]-L-lysine.. It participates in protein modification; protein ubiquitination. E3 ubiquitin-protein ligase involved in Golgi membrane fusion and regulation of small GTPases. Acts as a regulator of Golgi membrane dynamics during the cell cycle: recruited to Golgi membrane by Rab proteins and regulates postmitotic Golgi membrane fusion. Acts by mediating ubiquitination during mitotic Golgi disassembly, ubiquitination serving as a signal for Golgi reassembly later, after cell division. The sequence is that of E3 ubiquitin-protein ligase HACE1 (hace1) from Xenopus tropicalis (Western clawed frog).